A 545-amino-acid polypeptide reads, in one-letter code: Hydroxylamine reductase (545 aa).

The [4Fe-4S] cluster site is built by C3, C6, C15, and C21. H241, E265, C309, C396, C424, C449, E483, and K485 together coordinate hybrid [4Fe-2O-2S] cluster. C396 carries the cysteine persulfide modification.

The protein belongs to the HCP family. It depends on [4Fe-4S] cluster as a cofactor. Requires hybrid [4Fe-2O-2S] cluster as cofactor.

The protein localises to the cytoplasm. It catalyses the reaction A + NH4(+) + H2O = hydroxylamine + AH2 + H(+). Catalyzes the reduction of hydroxylamine to form NH(3) and H(2)O. The chain is Hydroxylamine reductase from Zymomonas mobilis subsp. mobilis (strain ATCC 31821 / ZM4 / CP4).